A 209-amino-acid polypeptide reads, in one-letter code: 3-demethoxyubiquinol 3-hydroxylase (209 aa).

Fe cation-binding residues include glutamate 58, glutamate 88, histidine 91, glutamate 140, glutamate 172, and histidine 175.

This sequence belongs to the COQ7 family. Requires Fe cation as cofactor.

It is found in the cell membrane. The enzyme catalyses a 5-methoxy-2-methyl-3-(all-trans-polyprenyl)benzene-1,4-diol + AH2 + O2 = a 3-demethylubiquinol + A + H2O. Its pathway is cofactor biosynthesis; ubiquinone biosynthesis. Functionally, catalyzes the hydroxylation of 2-nonaprenyl-3-methyl-6-methoxy-1,4-benzoquinol during ubiquinone biosynthesis. The polypeptide is 3-demethoxyubiquinol 3-hydroxylase (Polaromonas naphthalenivorans (strain CJ2)).